A 311-amino-acid polypeptide reads, in one-letter code: Methionyl-tRNA formyltransferase (311 aa).

Residue 110–113 participates in (6S)-5,6,7,8-tetrahydrofolate binding; sequence SLLP.

Belongs to the Fmt family.

The catalysed reaction is L-methionyl-tRNA(fMet) + (6R)-10-formyltetrahydrofolate = N-formyl-L-methionyl-tRNA(fMet) + (6S)-5,6,7,8-tetrahydrofolate + H(+). Attaches a formyl group to the free amino group of methionyl-tRNA(fMet). The formyl group appears to play a dual role in the initiator identity of N-formylmethionyl-tRNA by promoting its recognition by IF2 and preventing the misappropriation of this tRNA by the elongation apparatus. In Sulfurihydrogenibium sp. (strain YO3AOP1), this protein is Methionyl-tRNA formyltransferase.